Consider the following 292-residue polypeptide: tRNA-cytidine(32) 2-sulfurtransferase (292 aa).

A PP-loop motif motif is present at residues 53-58 (SGGKDS). The [4Fe-4S] cluster site is built by cysteine 128, cysteine 131, and cysteine 219.

This sequence belongs to the TtcA family. As to quaternary structure, homodimer. Mg(2+) is required as a cofactor. The cofactor is [4Fe-4S] cluster.

The protein resides in the cytoplasm. It carries out the reaction cytidine(32) in tRNA + S-sulfanyl-L-cysteinyl-[cysteine desulfurase] + AH2 + ATP = 2-thiocytidine(32) in tRNA + L-cysteinyl-[cysteine desulfurase] + A + AMP + diphosphate + H(+). The protein operates within tRNA modification. Catalyzes the ATP-dependent 2-thiolation of cytidine in position 32 of tRNA, to form 2-thiocytidine (s(2)C32). The sulfur atoms are provided by the cysteine/cysteine desulfurase (IscS) system. This is tRNA-cytidine(32) 2-sulfurtransferase from Cereibacter sphaeroides (strain ATCC 17023 / DSM 158 / JCM 6121 / CCUG 31486 / LMG 2827 / NBRC 12203 / NCIMB 8253 / ATH 2.4.1.) (Rhodobacter sphaeroides).